Here is a 307-residue protein sequence, read N- to C-terminus: Zinc transporter ZIP9 (307 aa).

A helical transmembrane segment spans residues 4-24; that stretch reads FISISLLSLAMLVGCYVAGII. The N-linked (GlcNAc...) asparagine glycan is linked to asparagine 29. Transmembrane regions (helical) follow at residues 35-55, 106-126, 146-166, 176-196, and 210-230; these read LKLV…AVIV, AYIG…DQIG, ITTT…LGAA, LIVF…LVSF, and HLLV…LGLS. Residue asparagine 241 is glycosylated (N-linked (GlcNAc...) asparagine). The next 2 membrane-spanning stretches (helical) occupy residues 244–264 and 286–306; these read GVAM…HVLP and LEVA…VGHQ.

It belongs to the ZIP transporter (TC 2.A.5) family. As to expression, highly expressed in pancreas, testis, and pituitary and moderately in the kidney, liver, uterus, heart, prostate, and brain, whereas expression is lower in the ovary and colon.

It is found in the golgi apparatus. The protein localises to the trans-Golgi network membrane. Its subcellular location is the cell membrane. The protein resides in the cytoplasm. It localises to the perinuclear region. It is found in the mitochondrion. The protein localises to the nucleus. The catalysed reaction is Zn(2+)(in) = Zn(2+)(out). Its function is as follows. Transports zinc ions across cell and organelle membranes into the cytoplasm and regulates intracellular zinc homeostasis. Participates in the zinc ions efflux out of the secretory compartments. Regulates intracellular zinc level, resulting in the enhancement of AKT1 and MAPK3/MAPK1 (Erk1/2) phosphorylation in response to the BCR activation. Also functions as a membrane androgen receptor that mediates, through a G protein, the non-classical androgen signaling pathway, characterized by the activation of MAPK3/MAPK1 (Erk1/2) and transcription factors CREB1 or ATF1. This pathway contributes to CLDN1 and CLDN5 expression and tight junction formation between adjacent Sertoli cells. Mediates androgen-induced vascular endothelial cell proliferation through activation of an inhibitory G protein leading to the AKT1 and MAPK3/MAPK1 (Erk1/2) activation which in turn modulate inhibition (phosphorylation) of GSK3B and CCND1 transcription. Moreover, has dual functions as a membrane-bound androgen receptor and as an androgen-dependent zinc transporter both of which are mediated through an inhibitory G protein (Gi) that mediates both MAP kinase and zinc signaling leading to the androgen-dependent apoptotic process. The protein is Zinc transporter ZIP9 of Homo sapiens (Human).